We begin with the raw amino-acid sequence, 608 residues long: Elongation factor 4 (608 aa).

The tr-type G domain maps to 11 to 193 (KKIRNFSIIA…QIVEKVPEPS (183 aa)). GTP-binding positions include 23-28 (DHGKST) and 140-143 (NKID).

This sequence belongs to the TRAFAC class translation factor GTPase superfamily. Classic translation factor GTPase family. LepA subfamily.

The protein resides in the cell membrane. The enzyme catalyses GTP + H2O = GDP + phosphate + H(+). Required for accurate and efficient protein synthesis under certain stress conditions. May act as a fidelity factor of the translation reaction, by catalyzing a one-codon backward translocation of tRNAs on improperly translocated ribosomes. Back-translocation proceeds from a post-translocation (POST) complex to a pre-translocation (PRE) complex, thus giving elongation factor G a second chance to translocate the tRNAs correctly. Binds to ribosomes in a GTP-dependent manner. This chain is Elongation factor 4, found in Listeria welshimeri serovar 6b (strain ATCC 35897 / DSM 20650 / CCUG 15529 / CIP 8149 / NCTC 11857 / SLCC 5334 / V8).